Here is a 398-residue protein sequence, read N- to C-terminus: Acetate kinase 1 (398 aa).

N9 is a binding site for Mg(2+). K16 is a binding site for ATP. R89 lines the substrate pocket. Catalysis depends on D146, which acts as the Proton donor/acceptor. ATP is bound by residues 206–210, 281–283, and 329–333; these read HLGNG, DCR, and GIGEN. Residue E384 coordinates Mg(2+).

It belongs to the acetokinase family. Homodimer. Requires Mg(2+) as cofactor. Mn(2+) serves as cofactor.

It localises to the cytoplasm. It catalyses the reaction acetate + ATP = acetyl phosphate + ADP. It functions in the pathway metabolic intermediate biosynthesis; acetyl-CoA biosynthesis; acetyl-CoA from acetate: step 1/2. In terms of biological role, catalyzes the formation of acetyl phosphate from acetate and ATP. Can also catalyze the reverse reaction. This chain is Acetate kinase 1, found in Aliivibrio fischeri (strain ATCC 700601 / ES114) (Vibrio fischeri).